A 154-amino-acid chain; its full sequence is Secreted RxLR effector protein PITG_21681 (154 aa).

The signal sequence occupies residues 1–20 (MRRYAALMVIDAVLLSTSQA). Residues 42–70 (SAERDGGIPNKRSLRRISVTESNDGERDE) are disordered. The RxLR-dEER signature appears at 53–72 (RSLRRISVTESNDGERDEER).

Belongs to the RxLR effector family.

Its subcellular location is the secreted. The protein localises to the host cell. Functionally, secreted effector that is involved in host plant infection. Increases the susceptibility to P.infestans and reduces the plant growth. Affects the expression of host genes. The polypeptide is Secreted RxLR effector protein PITG_21681 (Phytophthora infestans (strain T30-4) (Potato late blight agent)).